A 260-amino-acid polypeptide reads, in one-letter code: Cytosolic Fe-S cluster assembly factor Nubp2 homolog (260 aa).

Glycine 14 to serine 21 contacts ATP. The [4Fe-4S] cluster site is built by cysteine 188 and cysteine 191.

The protein belongs to the Mrp/NBP35 ATP-binding proteins family. NUBP2/CFD1 subfamily. Heterotetramer of 2 Nubp1 and 2 Nubp2 chains. The cofactor is [4Fe-4S] cluster.

It localises to the cytoplasm. Component of the cytosolic iron-sulfur (Fe/S) protein assembly (CIA) machinery. Required for maturation of extramitochondrial Fe-S proteins. The Nubp1-Nubp2 heterotetramer forms a Fe-S scaffold complex, mediating the de novo assembly of an Fe-S cluster and its transfer to target apoproteins. In Drosophila sechellia (Fruit fly), this protein is Cytosolic Fe-S cluster assembly factor Nubp2 homolog.